The primary structure comprises 85 residues: SCOCO-like protein 1 (85 aa).

A compositionally biased stretch (polar residues) spans 1–20; that stretch reads MSAENISTGSPTGKQPSSEV. Residues 1-34 form a disordered region; sequence MSAENISTGSPTGKQPSSEVNLGEREAGTKNERM. Position 2 is an N-acetylserine (serine 2). The residue at position 10 (serine 10) is a Phosphoserine. The segment covering 22–34 has biased composition (basic and acidic residues); the sequence is LGEREAGTKNERM.

The protein belongs to the SLO1 family. Interacts with ARL3.

This chain is SCOCO-like protein 1 (SLO1), found in Saccharomyces cerevisiae (strain ATCC 204508 / S288c) (Baker's yeast).